A 351-amino-acid chain; its full sequence is uncharacterized protein (351 aa).

Mn(2+) is bound by residues Asp-215, Asp-226, His-290, Glu-319, and Glu-333.

Belongs to the peptidase M24B family. Mn(2+) serves as cofactor.

This is an uncharacterized protein from Staphylococcus haemolyticus (strain JCSC1435).